The sequence spans 1684 residues: GRIP and coiled-coil domain-containing protein 2 (1684 aa).

Met1 is subject to N-acetylmethionine. The tract at residues 1–22 (MEDLVQDGVASPATPGTGKSKL) is disordered. At Ser11 the chain carries Phosphoserine. A Phosphothreonine modification is found at Thr14. Residues 110 to 1618 (VTKMGDAHKE…REKSAANLEY (1509 aa)) are a coiled coil. Ser236, Ser1483, and Ser1487 each carry phosphoserine. Residues 1475–1502 (LKNEPTTRSPVSSQQSLKNLRERRNTDL) are disordered. Residues 1477–1492 (NEPTTRSPVSSQQSLK) show a composition bias toward polar residues. Positions 1574-1613 (HLNGLLRETEATNAILMEQIKLLKSEIRRLERNQEREKSA) are mediates interaction with RAB6A. Residues 1574-1684 (HLNGLLRETE…SYLHSWSGLR (111 aa)) are mediates interaction with RAB9A. The 51-residue stretch at 1609–1659 (REKSAANLEYLKNVLLQFIFLKPGSERERLLPVINTMLQLSPEEKGKLAAV) folds into the GRIP domain.

Homodimer. Interacts (via GRIP domain) with RAB6A (preferentially in its GTP-bound form). May interact (RAB6A-dependent) with ARL1; according to PubMed:19703403, RAB6A and ARL1 are not involved in GCC2 Golgi localization as proposed by PubMed:18243103. Interacts (probably via GRIP domain) with RAB9A (preferentially in its GTP-bound form). Interacts with CLASP1 and CLASP2; recruits both proteins to membranes of the TGN. Interacts with STX16. In terms of tissue distribution, ubiquitous.

It is found in the cytoplasm. The protein resides in the golgi apparatus. Its subcellular location is the trans-Golgi network membrane. In terms of biological role, golgin which probably tethers transport vesicles to the trans-Golgi network (TGN) and regulates vesicular transport between the endosomes and the Golgi. As a RAB9A effector it is involved in recycling of the mannose 6-phosphate receptor from the late endosomes to the TGN. May also play a role in transport between the recycling endosomes and the Golgi. Required for maintenance of the Golgi structure, it is involved in the biogenesis of noncentrosomal, Golgi-associated microtubules through recruitment of CLASP1 and CLASP2. The sequence is that of GRIP and coiled-coil domain-containing protein 2 (GCC2) from Homo sapiens (Human).